Reading from the N-terminus, the 289-residue chain is Urease accessory protein UreD (289 aa).

Belongs to the UreD family. UreD, UreF and UreG form a complex that acts as a GTP-hydrolysis-dependent molecular chaperone, activating the urease apoprotein by helping to assemble the nickel containing metallocenter of UreC. The UreE protein probably delivers the nickel.

Its subcellular location is the cytoplasm. Its function is as follows. Required for maturation of urease via the functional incorporation of the urease nickel metallocenter. This Xanthobacter autotrophicus (strain ATCC BAA-1158 / Py2) protein is Urease accessory protein UreD.